A 143-amino-acid chain; its full sequence is Large ribosomal subunit protein uL16c (143 aa).

This sequence belongs to the universal ribosomal protein uL16 family. Part of the 50S ribosomal subunit.

The protein resides in the plastid. The protein localises to the chloroplast. The chain is Large ribosomal subunit protein uL16c from Spirogyra maxima (Green alga).